A 646-amino-acid polypeptide reads, in one-letter code: DEAD-box ATP-dependent RNA helicase 52 (646 aa).

Disordered stretches follow at residues 1–64 (MSSN…ANSG) and 76–117 (GSGY…PAVN). S2 carries the N-acetylserine modification. 2 stretches are compositionally biased toward gly residues: residues 54–64 (DRGGYGGANSG) and 76–87 (GSGYGGRGGPVG). Residues 146–174 (NTFAEIDLGEALNLNIQRCKYVKPTPVQR) carry the Q motif motif. The Helicase ATP-binding domain maps to 177–361 (IPILAAGRDL…SDFLSNYIFL (185 aa)). 190 to 197 (AQTGSGKT) is a binding site for ATP. The DEAD box motif lies at 305–308 (DEAD). The 152-residue stretch at 388 to 539 (HLMDLLHAQR…EVPDWLTRYA (152 aa)) folds into the Helicase C-terminal domain.

This sequence belongs to the DEAD box helicase family. DDX3/DED1 subfamily.

The catalysed reaction is ATP + H2O = ADP + phosphate + H(+). The polypeptide is DEAD-box ATP-dependent RNA helicase 52 (RH52) (Arabidopsis thaliana (Mouse-ear cress)).